Here is a 393-residue protein sequence, read N- to C-terminus: Formate-dependent phosphoribosylglycinamide formyltransferase (393 aa).

Residues 22-23 and Glu82 contribute to the N(1)-(5-phospho-beta-D-ribosyl)glycinamide site; that span reads EL. ATP is bound by residues Arg114, Lys155, 160-165, 195-198, and Glu203; these read SSGHGQ and EGFV. In terms of domain architecture, ATP-grasp spans 119–308; that stretch reads RLAAEELGLP…QFALHARAVL (190 aa). Positions 267 and 279 each coordinate Mg(2+). N(1)-(5-phospho-beta-D-ribosyl)glycinamide is bound by residues Asp286, Lys356, and 363–364; that span reads RR.

Belongs to the PurK/PurT family. Homodimer.

The catalysed reaction is N(1)-(5-phospho-beta-D-ribosyl)glycinamide + formate + ATP = N(2)-formyl-N(1)-(5-phospho-beta-D-ribosyl)glycinamide + ADP + phosphate + H(+). It functions in the pathway purine metabolism; IMP biosynthesis via de novo pathway; N(2)-formyl-N(1)-(5-phospho-D-ribosyl)glycinamide from N(1)-(5-phospho-D-ribosyl)glycinamide (formate route): step 1/1. Functionally, involved in the de novo purine biosynthesis. Catalyzes the transfer of formate to 5-phospho-ribosyl-glycinamide (GAR), producing 5-phospho-ribosyl-N-formylglycinamide (FGAR). Formate is provided by PurU via hydrolysis of 10-formyl-tetrahydrofolate. The protein is Formate-dependent phosphoribosylglycinamide formyltransferase of Parabacteroides distasonis (strain ATCC 8503 / DSM 20701 / CIP 104284 / JCM 5825 / NCTC 11152).